Here is a 275-residue protein sequence, read N- to C-terminus: Large ribosomal subunit protein uL2 (275 aa).

Positions 222-275 are disordered; it reads GVAMNPVDHPMGGGEGRSSGGRHPCSPWGMPTKGYKTRKNKTTDKFIVRKRNKR.

It belongs to the universal ribosomal protein uL2 family. In terms of assembly, part of the 50S ribosomal subunit. Forms a bridge to the 30S subunit in the 70S ribosome.

Functionally, one of the primary rRNA binding proteins. Required for association of the 30S and 50S subunits to form the 70S ribosome, for tRNA binding and peptide bond formation. It has been suggested to have peptidyltransferase activity; this is somewhat controversial. Makes several contacts with the 16S rRNA in the 70S ribosome. This is Large ribosomal subunit protein uL2 from Desulfatibacillum aliphaticivorans.